We begin with the raw amino-acid sequence, 117 residues long: Large ribosomal subunit protein bL19 (117 aa).

It belongs to the bacterial ribosomal protein bL19 family.

This protein is located at the 30S-50S ribosomal subunit interface and may play a role in the structure and function of the aminoacyl-tRNA binding site. This chain is Large ribosomal subunit protein bL19, found in Vibrio cholerae serotype O1 (strain ATCC 39541 / Classical Ogawa 395 / O395).